Consider the following 126-residue polypeptide: MLSRLLKCKIHRAVVTHAELHYEGSCAIDGVLMDLAGIREYEEIHVWNVTNGKRFTTYAIRGEDHSGIISVNGGAAHQAEVGDLVIIATFGDFTEVEANAHKPRLVYANPDNTVNHTANCIPVQVA.

Ser25 serves as the catalytic Schiff-base intermediate with substrate; via pyruvic acid. Ser25 carries the post-translational modification Pyruvic acid (Ser). Residue Thr57 coordinates substrate. Tyr58 acts as the Proton donor in catalysis. 73 to 75 (GGA) contacts substrate.

The protein belongs to the PanD family. In terms of assembly, heterooctamer of four alpha and four beta subunits. It depends on pyruvate as a cofactor. Is synthesized initially as an inactive proenzyme, which is activated by self-cleavage at a specific serine bond to produce a beta-subunit with a hydroxyl group at its C-terminus and an alpha-subunit with a pyruvoyl group at its N-terminus.

It is found in the cytoplasm. The enzyme catalyses L-aspartate + H(+) = beta-alanine + CO2. Its pathway is cofactor biosynthesis; (R)-pantothenate biosynthesis; beta-alanine from L-aspartate: step 1/1. Catalyzes the pyruvoyl-dependent decarboxylation of aspartate to produce beta-alanine. The protein is Aspartate 1-decarboxylase of Acinetobacter baylyi (strain ATCC 33305 / BD413 / ADP1).